Consider the following 470-residue polypeptide: Argininosuccinate lyase (470 aa).

This sequence belongs to the lyase 1 family. Argininosuccinate lyase subfamily.

It is found in the cytoplasm. It catalyses the reaction 2-(N(omega)-L-arginino)succinate = fumarate + L-arginine. It participates in amino-acid biosynthesis; L-arginine biosynthesis; L-arginine from L-ornithine and carbamoyl phosphate: step 3/3. The protein is Argininosuccinate lyase of Prochlorococcus marinus (strain MIT 9303).